Here is a 367-residue protein sequence, read N- to C-terminus: Phosphoribosylformylglycinamidine cyclo-ligase (367 aa).

This sequence belongs to the AIR synthase family.

It localises to the cytoplasm. It catalyses the reaction 2-formamido-N(1)-(5-O-phospho-beta-D-ribosyl)acetamidine + ATP = 5-amino-1-(5-phospho-beta-D-ribosyl)imidazole + ADP + phosphate + H(+). It functions in the pathway purine metabolism; IMP biosynthesis via de novo pathway; 5-amino-1-(5-phospho-D-ribosyl)imidazole from N(2)-formyl-N(1)-(5-phospho-D-ribosyl)glycinamide: step 2/2. The chain is Phosphoribosylformylglycinamidine cyclo-ligase from Cyanothece sp. (strain PCC 7425 / ATCC 29141).